Consider the following 297-residue polypeptide: MKHITDLYESVNSTMSNKSDCPPVVLPEEVFFTISVIGVLENLIVLLAVIKNKNLQSPMYFFICSLAISDMLGSLYKILENILIIFRNMGYLEPRGGFESTADDVVDSLFILSLLGSICSLSAIAADRYITIFHALQYQRLVTPRRAAVVLLIIWACCIGSGITIVTFSHHVPAVIAFTALFPLMLVFILCLYGHMFLLARSHARRVSTLPRANMKGAITLTVLLGVFIFCWAPFVLHILLMTFCPADPYCACYLALFQVNAVLIMCNAIIDPFIYAFRSPELRDAFKKMIICKRYP.

The Extracellular portion of the chain corresponds to 1-23 (MKHITDLYESVNSTMSNKSDCPP). Residues N12 and N17 are each glycosylated (N-linked (GlcNAc...) asparagine). 2 disulfide bridges follow: C21–C253 and C245–C251. The helical transmembrane segment at 24–49 (VVLPEEVFFTISVIGVLENLIVLLAV) threads the bilayer. Topologically, residues 50-58 (IKNKNLQSP) are cytoplasmic. Residues 59–79 (MYFFICSLAISDMLGSLYKIL) form a helical membrane-spanning segment. At 80–104 (ENILIIFRNMGYLEPRGGFESTADD) the chain is on the extracellular side. A helical transmembrane segment spans residues 105–126 (VVDSLFILSLLGSICSLSAIAA). The Cytoplasmic segment spans residues 127–147 (DRYITIFHALQYQRLVTPRRA). The chain crosses the membrane as a helical span at residues 148-168 (AVVLLIIWACCIGSGITIVTF). The Extracellular segment spans residues 169 to 180 (SHHVPAVIAFTA). The helical transmembrane segment at 181–199 (LFPLMLVFILCLYGHMFLL) threads the bilayer. Topologically, residues 200–217 (ARSHARRVSTLPRANMKG) are cytoplasmic. The chain crosses the membrane as a helical span at residues 218–244 (AITLTVLLGVFIFCWAPFVLHILLMTF). Residues 245 to 256 (CPADPYCACYLA) lie on the Extracellular side of the membrane. A helical transmembrane segment spans residues 257–278 (LFQVNAVLIMCNAIIDPFIYAF). The Cytoplasmic portion of the chain corresponds to 279–297 (RSPELRDAFKKMIICKRYP). C293 is lipidated: S-palmitoyl cysteine.

Belongs to the G-protein coupled receptor 1 family. As to quaternary structure, homodimer. Interacts with corticotropin (ACTH). Interacts with MRAP; this interaction targets MC2R to the plasma membrane. Interacts with MRAP2; competing with MRAP for binding to MC2R and impairing the binding of corticotropin (ACTH). Ubiquitinated by MGRN1 that may be involved in post-endocytic trafficking and/or degradation of internalized receptor. Expressed in skin and adrenal gland tissues.

It localises to the cell membrane. Functionally, hormone receptor primarily expressed in adrenal cortex that plays a key role in regulating adrenocortical function. Upon corticotropin (ACTH) binding, facilitates the release of adrenal glucocorticoids, including cortisol and corticosterone. In addition, MC2R is required for fetal and neonatal adrenal gland development. Mechanistically, activates adenylate cyclase (cAMP), the MAPK cascade as well as the cAMP-dependent protein kinase A pathway leading to steroidogenic factor 1/NR5A1-mediated transcriptional activation. The polypeptide is Adrenocorticotropic hormone receptor (MC2R) (Sus scrofa (Pig)).